Here is a 582-residue protein sequence, read N- to C-terminus: V-type ATP synthase alpha chain (582 aa).

ATP is bound at residue 231–238; the sequence is GPFGSGKT.

It belongs to the ATPase alpha/beta chains family.

The enzyme catalyses ATP + H2O + 4 H(+)(in) = ADP + phosphate + 5 H(+)(out). Produces ATP from ADP in the presence of a proton gradient across the membrane. The V-type alpha chain is a catalytic subunit. The chain is V-type ATP synthase alpha chain from Deinococcus deserti (strain DSM 17065 / CIP 109153 / LMG 22923 / VCD115).